Consider the following 122-residue polypeptide: Large ribosomal subunit protein uL14 (122 aa).

The protein belongs to the universal ribosomal protein uL14 family. As to quaternary structure, part of the 50S ribosomal subunit. Forms a cluster with proteins L3 and L19. In the 70S ribosome, L14 and L19 interact and together make contacts with the 16S rRNA in bridges B5 and B8.

In terms of biological role, binds to 23S rRNA. Forms part of two intersubunit bridges in the 70S ribosome. In Azorhizobium caulinodans (strain ATCC 43989 / DSM 5975 / JCM 20966 / LMG 6465 / NBRC 14845 / NCIMB 13405 / ORS 571), this protein is Large ribosomal subunit protein uL14.